The primary structure comprises 1311 residues: AF4/FMR2 family member 2 (1311 aa).

3 disordered regions span residues 94-187 (LVGI…LTQD), 204-229 (PQIG…GEDA), and 377-417 (TAGH…TKSV). The span at 101–111 (SVPQNPNNKNE) shows a compositional bias: polar residues. The span at 155–164 (SKPEWSRDSH) shows a compositional bias: basic and acidic residues. A compositionally biased stretch (polar residues) spans 165–187 (NPSTVLASQASGQPNKMQTLTQD). Composition is skewed to polar residues over residues 377 to 396 (TAGH…SQHL) and 403 to 417 (QKWN…TKSV). S430 carries the phosphoserine modification. 4 disordered regions span residues 457–530 (KAKP…KWQL), 574–726 (TNAS…DQEE), 818–867 (SLHA…IPEK), and 881–943 (PPCI…DKNI). Positions 465–477 (VNPPLATPQPPPA) are enriched in pro residues. Over residues 478–491 (VQASGGSGSSSESE) the composition is skewed to low complexity. A Phosphothreonine modification is found at T517. Basic and acidic residues predominate over residues 582 to 597 (EPKERPLLSLIREKAR). Residues 615-625 (STTSETVSQRT) are compositionally biased toward polar residues. Over residues 655–668 (PKEKESVELHDPPR) the composition is skewed to basic and acidic residues. Residues 669 to 679 (GRNKATAHKPA) show a composition bias toward basic residues. The span at 857–867 (PIEVAEKIPEK) shows a compositional bias: basic and acidic residues. Pro residues-rich tracts occupy residues 883 to 892 (CISPAPPHKP) and 913 to 922 (FPPPLSPLPE).

This sequence belongs to the AF4 family. In terms of tissue distribution, brain (most abundant in hippocampus and amygdala), placenta and lung.

Its subcellular location is the nucleus speckle. Functionally, RNA-binding protein. Might be involved in alternative splicing regulation through an interaction with G-quartet RNA structure. The polypeptide is AF4/FMR2 family member 2 (Homo sapiens (Human)).